A 115-amino-acid polypeptide reads, in one-letter code: T cell receptor beta variable 12-5 (115 aa).

Residues 1-21 (MATRLLCCVVLCLLGEELIDA) form the signal peptide. The Ig-like domain occupies 22–115 (RVTQTPRHKV…SAVYFCASGL (94 aa)). The cysteines at positions 42 and 111 are disulfide-linked.

In terms of assembly, alpha-beta TR is a heterodimer composed of an alpha and beta chain; disulfide-linked. The alpha-beta TR is associated with the transmembrane signaling CD3 coreceptor proteins to form the TR-CD3 (TcR or TCR). The assembly of alpha-beta TR heterodimers with CD3 occurs in the endoplasmic reticulum where a single alpha-beta TR heterodimer associates with one CD3D-CD3E heterodimer, one CD3G-CD3E heterodimer and one CD247 homodimer forming a stable octameric structure. CD3D-CD3E and CD3G-CD3E heterodimers preferentially associate with TR alpha and TR beta chains, respectively. The association of the CD247 homodimer is the last step of TcR assembly in the endoplasmic reticulum and is required for transport to the cell surface.

It localises to the cell membrane. In terms of biological role, v region of the variable domain of T cell receptor (TR) beta chain that participates in the antigen recognition. Alpha-beta T cell receptors are antigen specific receptors which are essential to the immune response and are present on the cell surface of T lymphocytes. Recognize peptide-major histocompatibility (MH) (pMH) complexes that are displayed by antigen presenting cells (APC), a prerequisite for efficient T cell adaptive immunity against pathogens. Binding of alpha-beta TR to pMH complex initiates TR-CD3 clustering on the cell surface and intracellular activation of LCK that phosphorylates the ITAM motifs of CD3G, CD3D, CD3E and CD247 enabling the recruitment of ZAP70. In turn ZAP70 phosphorylates LAT, which recruits numerous signaling molecules to form the LAT signalosome. The LAT signalosome propagates signal branching to three major signaling pathways, the calcium, the mitogen-activated protein kinase (MAPK) kinase and the nuclear factor NF-kappa-B (NF-kB) pathways, leading to the mobilization of transcription factors that are critical for gene expression and essential for T cell growth and differentiation. The T cell repertoire is generated in the thymus, by V-(D)-J rearrangement. This repertoire is then shaped by intrathymic selection events to generate a peripheral T cell pool of self-MH restricted, non-autoaggressive T cells. Post-thymic interaction of alpha-beta TR with the pMH complexes shapes TR structural and functional avidity. The chain is T cell receptor beta variable 12-5 from Homo sapiens (Human).